Consider the following 359-residue polypeptide: N-acetyl-gamma-glutamyl-phosphate reductase (359 aa).

The active site involves Cys-162.

Belongs to the NAGSA dehydrogenase family. Type 1 subfamily.

The protein resides in the cytoplasm. It catalyses the reaction N-acetyl-L-glutamate 5-semialdehyde + phosphate + NADP(+) = N-acetyl-L-glutamyl 5-phosphate + NADPH + H(+). It participates in amino-acid biosynthesis; L-arginine biosynthesis; N(2)-acetyl-L-ornithine from L-glutamate: step 3/4. In terms of biological role, catalyzes the NADPH-dependent reduction of N-acetyl-5-glutamyl phosphate to yield N-acetyl-L-glutamate 5-semialdehyde. The chain is N-acetyl-gamma-glutamyl-phosphate reductase from Prochlorococcus marinus (strain MIT 9211).